We begin with the raw amino-acid sequence, 275 residues long: Sororin-B (275 aa).

A compositionally biased stretch (basic and acidic residues) spans 1–16; that stretch reads MSERKKRGSSDADSRR. Disordered regions lie at residues 1–42 and 63–117; these read MSER…PAPI and NTGS…EIDV. Polar residues-rich tracts occupy residues 63–76 and 93–112; these read NTGS…SNVT and NAFS…QSSA. Positions 91-93 match the KEN box motif; the sequence is KEN. An FGF motif motif is present at residues 186 to 188; it reads FGF. The segment at 253–275 is C-terminal Sororin domain; sequence VDEWAAIMNAEFDEAEKFDLTVE.

The protein belongs to the sororin family. Interacts with the APC/C complex. Interacts with the chromatin-bound cohesin complex; the interaction is indirect, occurs after DNA replication and requires acetylation of the cohesin component smc3. Interacts (via the FGF motif) with pds5a and pds5b; the interaction is direct and prevents the interaction of pds5a with wapl. In terms of processing, ubiquitinated by the APC/C complex in G1, leading to its degradation.

Its subcellular location is the nucleus. The protein resides in the chromosome. It localises to the cytoplasm. Functionally, regulator of sister chromatid cohesion in mitosis stabilizing cohesin complex association with chromatin. May antagonize the action of wapl which stimulates cohesin dissociation from chromatin. Cohesion ensures that chromosome partitioning is accurate in both meiotic and mitotic cells and plays an important role in DNA repair. Required for efficient DNA double-stranded break repair. The sequence is that of Sororin-B (cdca5-b) from Xenopus laevis (African clawed frog).